Reading from the N-terminus, the 740-residue chain is Ion-translocating oxidoreductase complex subunit C (740 aa).

4Fe-4S ferredoxin-type domains are found at residues 369–397 and 407–436; these read GEPQEEQSCIRCSACADACPADLLPQQLY and KATTHNIADCIECGACAWVCPSNIPLVQYF. C377, C380, C383, C387, C416, C419, C422, and C426 together coordinate [4Fe-4S] cluster. Positions 602–716 are disordered; it reads KLEQQQANAE…EPEEQVDPRK (115 aa).

It belongs to the 4Fe4S bacterial-type ferredoxin family. RnfC subfamily. In terms of assembly, the complex is composed of six subunits: RsxA, RsxB, RsxC, RsxD, RsxE and RsxG. The cofactor is [4Fe-4S] cluster.

It is found in the cell inner membrane. Part of a membrane-bound complex that couples electron transfer with translocation of ions across the membrane. Required to maintain the reduced state of SoxR. The polypeptide is Ion-translocating oxidoreductase complex subunit C (Escherichia coli O139:H28 (strain E24377A / ETEC)).